Here is a 372-residue protein sequence, read N- to C-terminus: N-methyl-L-tryptophan oxidase (372 aa).

Residue 4–34 (DLIIIGSGSVGAAAGYYATRAGLNVLMTDAH) participates in FAD binding. Cys308 carries the post-translational modification S-8alpha-FAD cysteine.

Belongs to the MSOX/MTOX family. MTOX subfamily. In terms of assembly, monomer. Requires FAD as cofactor.

It catalyses the reaction N(alpha)-methyl-L-tryptophan + O2 + H2O = L-tryptophan + formaldehyde + H2O2. In terms of biological role, catalyzes the oxidative demethylation of N-methyl-L-tryptophan. This chain is N-methyl-L-tryptophan oxidase, found in Escherichia coli O1:K1 / APEC.